Reading from the N-terminus, the 75-residue chain is Psi-conotoxin PIIIE (75 aa).

An N-terminal signal peptide occupies residues 1–19; sequence MSKLGALLTICLLLFPITA. Positions 20–50 are excised as a propeptide; the sequence is LLMDGDQPADRPAERMDYDISSEVHRLLERR. Residues proline 52, proline 53, and proline 64 each carry the 4-hydroxyproline modification. Intrachain disulfides connect cysteine 54–cysteine 66, cysteine 55–cysteine 71, and cysteine 60–cysteine 72. Glycine 74 bears the Glycine amide mark.

As to expression, expressed by the venom duct.

It localises to the secreted. Its function is as follows. Psi-conotoxins act on postsynaptic membranes, and act as non-competitive antagonist of nicotinic acetylcholine receptors (nAChR). Is more toxic than Psi-conotoxin PIIIF. In vivo, has paralytic activity when injected intraperitoneally into goldfish. This is Psi-conotoxin PIIIE from Conus purpurascens (Purple cone).